A 128-amino-acid chain; its full sequence is Azurin (128 aa).

Residues 1–128 form the Plastocyanin-like domain; it reads AECKTTIDST…SMMKGTVTLK (128 aa). Cys-3 and Cys-26 are disulfide-bonded. Cu cation contacts are provided by His-46, Cys-112, His-117, and Met-121.

The protein resides in the periplasm. Functionally, transfers electrons from cytochrome c551 to cytochrome oxidase. The sequence is that of Azurin from Pseudomonas fluorescens biotype B.